Reading from the N-terminus, the 346-residue chain is Biotin synthase (346 aa).

The 230-residue stretch at 36 to 265 (YFGRQVMLHR…KAEIRIGGGR (230 aa)) folds into the Radical SAM core domain. 3 residues coordinate [4Fe-4S] cluster: cysteine 54, cysteine 58, and cysteine 61. The [2Fe-2S] cluster site is built by cysteine 98, cysteine 130, cysteine 190, and arginine 260.

Belongs to the radical SAM superfamily. Biotin synthase family. In terms of assembly, homodimer. [4Fe-4S] cluster is required as a cofactor. It depends on [2Fe-2S] cluster as a cofactor.

The catalysed reaction is (4R,5S)-dethiobiotin + (sulfur carrier)-SH + 2 reduced [2Fe-2S]-[ferredoxin] + 2 S-adenosyl-L-methionine = (sulfur carrier)-H + biotin + 2 5'-deoxyadenosine + 2 L-methionine + 2 oxidized [2Fe-2S]-[ferredoxin]. Its pathway is cofactor biosynthesis; biotin biosynthesis; biotin from 7,8-diaminononanoate: step 2/2. In terms of biological role, catalyzes the conversion of dethiobiotin (DTB) to biotin by the insertion of a sulfur atom into dethiobiotin via a radical-based mechanism. This chain is Biotin synthase, found in Acaryochloris marina (strain MBIC 11017).